A 262-amino-acid polypeptide reads, in one-letter code: 3-deoxy-manno-octulosonate cytidylyltransferase (262 aa).

Belongs to the KdsB family.

It is found in the cytoplasm. It carries out the reaction 3-deoxy-alpha-D-manno-oct-2-ulosonate + CTP = CMP-3-deoxy-beta-D-manno-octulosonate + diphosphate. It participates in nucleotide-sugar biosynthesis; CMP-3-deoxy-D-manno-octulosonate biosynthesis; CMP-3-deoxy-D-manno-octulosonate from 3-deoxy-D-manno-octulosonate and CTP: step 1/1. It functions in the pathway bacterial outer membrane biogenesis; lipopolysaccharide biosynthesis. Its function is as follows. Activates KDO (a required 8-carbon sugar) for incorporation into bacterial lipopolysaccharide in Gram-negative bacteria. The polypeptide is 3-deoxy-manno-octulosonate cytidylyltransferase (Acidovorax ebreus (strain TPSY) (Diaphorobacter sp. (strain TPSY))).